Consider the following 114-residue polypeptide: Ribosome-binding factor A (114 aa).

It belongs to the RbfA family. In terms of assembly, monomer. Binds 30S ribosomal subunits, but not 50S ribosomal subunits or 70S ribosomes.

The protein resides in the cytoplasm. Functionally, one of several proteins that assist in the late maturation steps of the functional core of the 30S ribosomal subunit. Associates with free 30S ribosomal subunits (but not with 30S subunits that are part of 70S ribosomes or polysomes). Required for efficient processing of 16S rRNA. May interact with the 5'-terminal helix region of 16S rRNA. This Phytoplasma mali (strain AT) protein is Ribosome-binding factor A.